The sequence spans 246 residues: Phosducin (246 aa).

Over residues 1–14 the composition is skewed to acidic residues; the sequence is MEEAKSQSLEEDFE. The disordered stretch occupies residues 1–70; that stretch reads MEEAKSQSLE…GKDSKERVSR (70 aa). The region spanning 1-244 is the Phosducin domain; the sequence is MEEAKSQSLE…LEHTKIEEED (244 aa). The segment covering 60-69 has biased composition (basic and acidic residues); it reads NGKDSKERVS. Residue S73 is modified to Phosphoserine; by PKA. The tract at residues 111–246 is thioredoxin fold; that stretch reads YGFVYELETG…HTKIEEEDVE (136 aa).

The protein belongs to the phosducin family. As to quaternary structure, forms a complex with the beta and gamma subunits of the GTP-binding protein, transducin. Interacts with CRX. Post-translationally, light-induced changes in cyclic nucleotide levels modulate the phosphorylation of this protein by cAMP kinase.

The protein resides in the cytoplasm. It is found in the cytosol. It localises to the nucleus. The protein localises to the cell projection. Its subcellular location is the cilium. The protein resides in the photoreceptor outer segment. It is found in the photoreceptor inner segment. Functionally, may participate in the regulation of visual phototransduction or in the integration of photoreceptor metabolism. Inhibits the transcriptional activation activity of the cone-rod homeobox CRX. The polypeptide is Phosducin (PDC) (Homo sapiens (Human)).